The primary structure comprises 256 residues: Homeobox-leucine zipper protein HOX18 (256 aa).

Residues 52-116 (YDHGRDEEQA…GGGGGGTRKK (65 aa)) are disordered. Over residues 102–112 (DGGSGGGGGGG) the composition is skewed to gly residues. Positions 112–171 (GTRKKLQLTKEQSTLLEDSFRVHNILSHAQKHELARQLKLKPRQVEVWFQNRRARTKLKQ) form a DNA-binding region, homeobox. Positions 170-214 (KQTEVDCEFLKRCCESLTEENKQLKHELMELRRLASPAAAAAGSQ) are leucine-zipper.

Belongs to the HD-ZIP homeobox family. Class II subfamily. As to expression, expressed in roots, leaf sheaths and blades and panicles.

The protein localises to the nucleus. Its function is as follows. Probable transcription factor. This Oryza sativa subsp. japonica (Rice) protein is Homeobox-leucine zipper protein HOX18 (HOX18).